Consider the following 611-residue polypeptide: tRNA uridine 5-carboxymethylaminomethyl modification enzyme MnmG (611 aa).

FAD is bound by residues 12–17 (GGGHAG), V124, and S179. 271–285 (GPRYCPSVEDKIVRF) contacts NAD(+). Q368 serves as a coordination point for FAD.

This sequence belongs to the MnmG family. In terms of assembly, homodimer. Heterotetramer of two MnmE and two MnmG subunits. It depends on FAD as a cofactor.

The protein resides in the cytoplasm. Its function is as follows. NAD-binding protein involved in the addition of a carboxymethylaminomethyl (cmnm) group at the wobble position (U34) of certain tRNAs, forming tRNA-cmnm(5)s(2)U34. This chain is tRNA uridine 5-carboxymethylaminomethyl modification enzyme MnmG, found in Mycoplasma mobile (strain ATCC 43663 / 163K / NCTC 11711) (Mesomycoplasma mobile).